The sequence spans 363 residues: Chorismate synthase (363 aa).

The NADP(+) site is built by Arg48 and Arg54. FMN contacts are provided by residues 125-127 (RSS), 237-238 (NA), Gly277, 292-296 (KPTSS), and Arg318.

The protein belongs to the chorismate synthase family. In terms of assembly, homotetramer. FMNH2 is required as a cofactor.

The enzyme catalyses 5-O-(1-carboxyvinyl)-3-phosphoshikimate = chorismate + phosphate. Its pathway is metabolic intermediate biosynthesis; chorismate biosynthesis; chorismate from D-erythrose 4-phosphate and phosphoenolpyruvate: step 7/7. Catalyzes the anti-1,4-elimination of the C-3 phosphate and the C-6 proR hydrogen from 5-enolpyruvylshikimate-3-phosphate (EPSP) to yield chorismate, which is the branch point compound that serves as the starting substrate for the three terminal pathways of aromatic amino acid biosynthesis. This reaction introduces a second double bond into the aromatic ring system. The protein is Chorismate synthase of Pseudomonas paraeruginosa (strain DSM 24068 / PA7) (Pseudomonas aeruginosa (strain PA7)).